The chain runs to 31 residues: GLFLDTLKGAAKDVAGKLEGLKCKITGCKLP.

C23 and C28 are joined by a disulfide.

It belongs to the frog skin active peptide (FSAP) family. Ranatuerin subfamily. Expressed by the skin glands.

It is found in the secreted. Functionally, antibacterial activity against Gram-positive bacterium S.aureus (MIC=60 uM). Shows no detectable hemolytic activity towards human erythrocytes. The sequence is that of Ranatuerin-2 from Aquarana catesbeiana (American bullfrog).